Reading from the N-terminus, the 212-residue chain is uncharacterized protein (212 aa).

2 disordered regions span residues 1-25 and 165-212; these read MARK…GRPN and STSG…HWGG. The segment covering 202–212 has biased composition (low complexity); the sequence is RSSSARGHWGG.

This is an uncharacterized protein from Escherichia coli (strain K12).